The sequence spans 430 residues: Adenylosuccinate synthetase (430 aa).

Residues 12–18 (GDEGKGK) and 40–42 (GHT) each bind GTP. The active-site Proton acceptor is the Asp13. Mg(2+) contacts are provided by Asp13 and Gly40. IMP-binding positions include 13-16 (DEGK), 38-41 (NAGH), Thr128, Arg142, Gln223, Thr238, and Arg302. The active-site Proton donor is His41. A substrate-binding site is contributed by 298–304 (TTTGRPR). Residues Arg304, 330–332 (SID), and 412–414 (SVG) contribute to the GTP site.

The protein belongs to the adenylosuccinate synthetase family. As to quaternary structure, homodimer. It depends on Mg(2+) as a cofactor.

The protein localises to the cytoplasm. It catalyses the reaction IMP + L-aspartate + GTP = N(6)-(1,2-dicarboxyethyl)-AMP + GDP + phosphate + 2 H(+). It functions in the pathway purine metabolism; AMP biosynthesis via de novo pathway; AMP from IMP: step 1/2. Its function is as follows. Plays an important role in the de novo pathway of purine nucleotide biosynthesis. Catalyzes the first committed step in the biosynthesis of AMP from IMP. The sequence is that of Adenylosuccinate synthetase from Streptococcus pyogenes serotype M2 (strain MGAS10270).